The chain runs to 247 residues: ATP synthase subunit a, plastid (247 aa).

5 helical membrane passes run 33–53, 95–115, 134–154, 199–219, and 220–240; these read FLVHGQVLITSWVVIAILLGS, VPFIGTMFLFIFVSNWSGALL, INTTVALALLTSAAYFYAGIL, LVVVVLVSLVPSVVPIPVMLL, and GLFTSGIQALIFATLAAAYIG.

Belongs to the ATPase A chain family. In terms of assembly, F-type ATPases have 2 components, CF(1) - the catalytic core - and CF(0) - the membrane proton channel. CF(1) has five subunits: alpha(3), beta(3), gamma(1), delta(1), epsilon(1). CF(0) has four main subunits: a, b, b' and c.

The protein localises to the plastid membrane. Its function is as follows. Key component of the proton channel; it plays a direct role in the translocation of protons across the membrane. The protein is ATP synthase subunit a, plastid of Cuscuta exaltata (Tall dodder).